The following is a 302-amino-acid chain: MQTLLNEILEEVRPLIGKGKVADYIPALADVPANQLGIAVYGNDGSYHCAGDARVPFSVQSISKVFSLVQAIGHSGEAIWERLGHEPSGQPFNSLVQLEFERGRPRNPFINAGALVICDINQSRFAAPTLSMRDFVRRLSGNPHISINTRVADSEYQFRARNAAMAYLMQSFGNFHNEVETVLRSYFSYCALQMNCLDLARAFCFLANDGFCKHSGEQILTRRQTQQVNSIMATSGLYDEAGNFAFRVGLPGKSGVGGGIVAIVPGQFTVCVWSPELNAAGNSLAGMAALELLSSRIGWSVF.

7 residues coordinate substrate: Ser-61, Asn-111, Glu-155, Asn-162, Tyr-186, Tyr-238, and Val-256.

Belongs to the glutaminase family. As to quaternary structure, homotetramer.

It catalyses the reaction L-glutamine + H2O = L-glutamate + NH4(+). The polypeptide is Glutaminase (Pseudomonas putida (strain ATCC 700007 / DSM 6899 / JCM 31910 / BCRC 17059 / LMG 24140 / F1)).